Here is a 575-residue protein sequence, read N- to C-terminus: RecBCD enzyme subunit RecD (575 aa).

170 to 177 (GGPGTGKT) is a binding site for ATP.

This sequence belongs to the RecD family. As to quaternary structure, heterotrimer of RecB, RecC and RecD. All subunits contribute to DNA-binding.

It catalyses the reaction Couples ATP hydrolysis with the unwinding of duplex DNA at the replication fork by translocating in the 5'-3' direction. This creates two antiparallel DNA single strands (ssDNA). The leading ssDNA polymer is the template for DNA polymerase III holoenzyme which synthesizes a continuous strand.. The enzyme catalyses ATP + H2O = ADP + phosphate + H(+). Functionally, a helicase/nuclease that prepares dsDNA breaks (DSB) for recombinational DNA repair. Binds to DSBs and unwinds DNA via a highly rapid and processive ATP-dependent bidirectional helicase activity. Holoenzyme degrades any linearized DNA that is unable to undergo homologous recombination. In the holoenzyme this subunit has ssDNA-dependent ATPase and 5'-3' helicase activity. When added to pre-assembled RecBC greatly stimulates nuclease activity and augments holoenzyme processivity. Unlike the case in E.coli, suppresses RecA-dependent homologous recombination, is instead required for single-strand annealing pathway repair of DSB. Its function is as follows. A helicase/nuclease that prepares dsDNA breaks (DSB) for recombinational DNA repair. Binds to DSBs and unwinds DNA via a highly rapid and processive ATP-dependent bidirectional helicase activity. Unwinds dsDNA until it encounters a Chi (crossover hotspot instigator) sequence from the 3' direction. Cuts ssDNA a few nucleotides 3' to the Chi site. The properties and activities of the enzyme are changed at Chi. The Chi-altered holoenzyme produces a long 3'-ssDNA overhang and facilitates RecA-binding to the ssDNA for homologous DNA recombination and repair. Holoenzyme degrades any linearized DNA that is unable to undergo homologous recombination. In the holoenzyme this subunit has ssDNA-dependent ATPase and 5'-3' helicase activity. When added to pre-assembled RecBC greatly stimulates nuclease activity and augments holoenzyme processivity. Negatively regulates the RecA-loading ability of RecBCD. The polypeptide is RecBCD enzyme subunit RecD (Mycobacterium tuberculosis (strain CDC 1551 / Oshkosh)).